The primary structure comprises 224 residues: Endonuclease NucS (224 aa).

Belongs to the NucS endonuclease family.

The protein resides in the cytoplasm. In terms of biological role, cleaves both 3' and 5' ssDNA extremities of branched DNA structures. This chain is Endonuclease NucS, found in Rhodococcus erythropolis (strain PR4 / NBRC 100887).